The primary structure comprises 344 residues: 17-beta-hydroxysteroid dehydrogenase type 1 (344 aa).

3 to 32 (PTVVLITGCSSGIGMHLAVRLASDRSQSFK) provides a ligand contact to NAD(+). Residues 10–38 (GCSS…ATLR) and Asp-66 each bind NADP(+). Ser-135 bears the Phosphoserine mark. Residue Ser-143 participates in substrate binding. The Proton acceptor role is filled by Tyr-156. Lys-160 lines the NADP(+) pocket.

Belongs to the short-chain dehydrogenases/reductases (SDR) family. As to quaternary structure, homodimer. Exists predominantly as a homodimer but also exits as monomer.

The protein localises to the cytoplasm. The enzyme catalyses 17beta-estradiol + NAD(+) = estrone + NADH + H(+). The catalysed reaction is 17beta-estradiol + NADP(+) = estrone + NADPH + H(+). It carries out the reaction testosterone + NADP(+) = androst-4-ene-3,17-dione + NADPH + H(+). The protein operates within steroid biosynthesis; estrogen biosynthesis. Functionally, favors the reduction of estrogens and androgens. Converts estrone (E1) to a more potent estrogen, 17beta-estradiol (E2). Also has 20-alpha-HSD activity. Uses preferentially NADH. This Mus musculus (Mouse) protein is 17-beta-hydroxysteroid dehydrogenase type 1.